We begin with the raw amino-acid sequence, 369 residues long: Carbamoyl phosphate synthase small chain (369 aa).

Residues 1-168 (MYGILVLEDG…KKVVKYPAKD (168 aa)) form a CPSase region. Positions 45, 220, and 222 each coordinate L-glutamine. Residues 172 to 364 (SCVVIDCGVK…VALGMKFKQE (193 aa)) form the Glutamine amidotransferase type-1 domain. Cys247 acts as the Nucleophile in catalysis. Leu248, Gln251, Asn289, Gly291, and Phe292 together coordinate L-glutamine. Catalysis depends on residues His337 and Glu339.

It belongs to the CarA family. As to quaternary structure, composed of two chains; the small (or glutamine) chain promotes the hydrolysis of glutamine to ammonia, which is used by the large (or ammonia) chain to synthesize carbamoyl phosphate. Tetramer of heterodimers (alpha,beta)4.

The enzyme catalyses hydrogencarbonate + L-glutamine + 2 ATP + H2O = carbamoyl phosphate + L-glutamate + 2 ADP + phosphate + 2 H(+). The catalysed reaction is L-glutamine + H2O = L-glutamate + NH4(+). It participates in amino-acid biosynthesis; L-arginine biosynthesis; carbamoyl phosphate from bicarbonate: step 1/1. It functions in the pathway pyrimidine metabolism; UMP biosynthesis via de novo pathway; (S)-dihydroorotate from bicarbonate: step 1/3. In terms of biological role, small subunit of the glutamine-dependent carbamoyl phosphate synthetase (CPSase). CPSase catalyzes the formation of carbamoyl phosphate from the ammonia moiety of glutamine, carbonate, and phosphate donated by ATP, constituting the first step of 2 biosynthetic pathways, one leading to arginine and/or urea and the other to pyrimidine nucleotides. The small subunit (glutamine amidotransferase) binds and cleaves glutamine to supply the large subunit with the substrate ammonia. The protein is Carbamoyl phosphate synthase small chain of Methanococcus vannielii (strain ATCC 35089 / DSM 1224 / JCM 13029 / OCM 148 / SB).